Reading from the N-terminus, the 450-residue chain is UDP-N-acetylmuramoylalanine--D-glutamate ligase (450 aa).

Residue 119–125 coordinates ATP; sequence GSNGKTT.

The protein belongs to the MurCDEF family.

It localises to the cytoplasm. The catalysed reaction is UDP-N-acetyl-alpha-D-muramoyl-L-alanine + D-glutamate + ATP = UDP-N-acetyl-alpha-D-muramoyl-L-alanyl-D-glutamate + ADP + phosphate + H(+). It participates in cell wall biogenesis; peptidoglycan biosynthesis. Its function is as follows. Cell wall formation. Catalyzes the addition of glutamate to the nucleotide precursor UDP-N-acetylmuramoyl-L-alanine (UMA). The sequence is that of UDP-N-acetylmuramoylalanine--D-glutamate ligase from Bacillus mycoides (strain KBAB4) (Bacillus weihenstephanensis).